Reading from the N-terminus, the 61-residue chain is Conotoxin Tx-D021 (61 aa).

A signal peptide spans 1–22 (MRCLPVFVILLLLIASTPSVDA). The propeptide occupies 23–48 (RAKTRDDMSLASFHDDAKRILQILQD). C60 carries the post-translational modification Cysteine amide.

It belongs to the conotoxin T superfamily. In terms of processing, contains 2 disulfide bonds that can be either 'C1-C3, C2-C4' or 'C1-C4, C2-C3', since these disulfide connectivities have been observed for conotoxins with cysteine framework V (for examples, see AC P0DQQ7 and AC P81755). In terms of tissue distribution, expressed by the venom duct.

The protein resides in the secreted. The chain is Conotoxin Tx-D021 from Conus textile (Cloth-of-gold cone).